The sequence spans 665 residues: mRNA cleavage and polyadenylation factor CLP1 (665 aa).

Residues lysine 91 and 195-200 each bind ATP; that span reads SAGKTS. 2 disordered regions span residues 218–283 and 593–615; these read VKEG…SQAK and PPPRNQSKDETSSPDDPGHHDYE. Basic and acidic residues-rich tracts occupy residues 219–238 and 598–614; these read KEGDDASRRAKHRSEPEIHP and QSKDETSSPDDPGHHDY.

It belongs to the Clp1 family. Clp1 subfamily. In terms of assembly, component of a pre-mRNA cleavage factor complex. Interacts directly with PCF11.

The protein resides in the nucleus. Functionally, required for endonucleolytic cleavage during polyadenylation-dependent pre-mRNA 3'-end formation. This Malassezia globosa (strain ATCC MYA-4612 / CBS 7966) (Dandruff-associated fungus) protein is mRNA cleavage and polyadenylation factor CLP1.